We begin with the raw amino-acid sequence, 294 residues long: Type 4 apparatus protein DotZ (294 aa).

In terms of assembly, the T4BSS is a complex nanomachine composed of several subcomplexes. This subunit is part of the Type IV Coupling Complex (T4CC), a subcomplex composed of the DotLMNYZ core and the IcmSW-LvgA adapter subunits, linked by the C-terminal tail of DotL. Six DotLMNYZ hetero-pentameric units may assemble into a hexameric nanomachine, forming an inner membrane channel for effectors to pass through. Makes significant contact with DotN and DotY, but engages weakly with DotM and DotL. DotY and DotZ are co-dependent for the assembly into the T4CC.

It is found in the cytoplasm. Component of the Dot/Icm type IVB secretion system (T4BSS), which is used to inject bacterial effector proteins into eukaryotic host cells. Part of a subcomplex which recruits effector proteins and delivers them to the core transmembrane subcomplex. DotY and DotZ play a role in effector translocation, but are not essential and do not influence the stability of the subcomplex main components. The DotY/DotZ main function is to optimize secretion by modulating the delivery trajectory of the IcmSW module and the localization of the machinery to the poles. The protein is Type 4 apparatus protein DotZ of Legionella pneumophila subsp. pneumophila (strain Philadelphia 1 / ATCC 33152 / DSM 7513).